We begin with the raw amino-acid sequence, 393 residues long: Pre-mRNA-splicing regulator WTAP (393 aa).

Positions 240-393 (QQQIQTSGNR…SSVNVQGSVL (154 aa)) are disordered. The segment covering 254-267 (ESKDEGETSGKDCG) has biased composition (basic and acidic residues). Positions 272–286 (GPSNGGSSHQRTHSS) are enriched in polar residues. Over residues 310 to 319 (LPNHSEERTS) the composition is skewed to basic and acidic residues. Over residues 320–353 (RGGSSYMNQLSTGYESVDSPTGSENSLTHQSNDT) the composition is skewed to polar residues. The span at 354-365 (DSNHDSQEEKPV) shows a compositional bias: basic and acidic residues. The span at 369–393 (GNRTVSSRHLQNGLDSSVNVQGSVL) shows a compositional bias: polar residues.

It belongs to the fl(2)d family. As to quaternary structure, component of the WMM complex, a N6-methyltransferase complex composed of a catalytic subcomplex, named MAC, and of an associated subcomplex, named MACOM. Component of the MACOM subcomplex.

The protein localises to the nucleus speckle. It is found in the nucleus. It localises to the nucleoplasm. Its function is as follows. Associated component of the WMM complex, a complex that mediates N6-methyladenosine (m6A) methylation of RNAs, a modification that plays a role in the efficiency of mRNA splicing and RNA processing. The sequence is that of Pre-mRNA-splicing regulator WTAP from Xenopus tropicalis (Western clawed frog).